A 264-amino-acid polypeptide reads, in one-letter code: Regulatory protein RecX (264 aa).

It belongs to the RecX family.

It localises to the cytoplasm. Modulates RecA activity. This is Regulatory protein RecX from Limosilactobacillus reuteri (strain DSM 20016) (Lactobacillus reuteri).